The following is a 244-amino-acid chain: Nodulation protein G (244 aa).

11–35 is a binding site for NAD(+); that stretch reads VTGASGAIGGAIARVLHAQGAIVGL. Ser139 lines the substrate pocket. The Proton acceptor role is filled by Tyr152.

It belongs to the short-chain dehydrogenases/reductases (SDR) family.

Proposed to modify Nod factor fatty acyl chain. The sequence is that of Nodulation protein G (nodG) from Rhizobium meliloti (Ensifer meliloti).